A 373-amino-acid chain; its full sequence is GTPase Obg (373 aa).

Positions 1-158 constitute an Obg domain; the sequence is MFVDSVELLI…KQVRLEMKLI (158 aa). Residues 62–83 are disordered; sequence NHIKAENGRPGEGRKKYGRKGQ. Residues 64 to 76 are compositionally biased toward basic and acidic residues; that stretch reads IKAENGRPGEGRK. The region spanning 159–362 is the OBG-type G domain; the sequence is ADVGLVGYPN…LRYALGDFVK (204 aa). GTP contacts are provided by residues 165–172, 190–194, 212–215, 280–283, and 343–345; these read GYPNVGKS, FTTLT, DIPG, TKID, and SSV. The Mg(2+) site is built by serine 172 and threonine 192.

Belongs to the TRAFAC class OBG-HflX-like GTPase superfamily. OBG GTPase family. In terms of assembly, monomer. The cofactor is Mg(2+).

It localises to the cytoplasm. An essential GTPase which binds GTP, GDP and possibly (p)ppGpp with moderate affinity, with high nucleotide exchange rates and a fairly low GTP hydrolysis rate. Plays a role in control of the cell cycle, stress response, ribosome biogenesis and in those bacteria that undergo differentiation, in morphogenesis control. In Sulfurovum sp. (strain NBC37-1), this protein is GTPase Obg.